Consider the following 250-residue polypeptide: Large ribosomal subunit protein uL30B (250 aa).

Belongs to the universal ribosomal protein uL30 family. In terms of assembly, component of the large ribosomal subunit (LSU). Mature yeast ribosomes consist of a small (40S) and a large (60S) subunit. The 40S small subunit contains 1 molecule of ribosomal RNA (18S rRNA) and at least 33 different proteins. The large 60S subunit contains 3 rRNA molecules (25S, 5.8S and 5S rRNA) and at least 46 different proteins.

It localises to the cytoplasm. It is found in the nucleus. The protein resides in the nucleolus. In terms of biological role, component of the ribosome, a large ribonucleoprotein complex responsible for the synthesis of proteins in the cell. The small ribosomal subunit (SSU) binds messenger RNAs (mRNAs) and translates the encoded message by selecting cognate aminoacyl-transfer RNA (tRNA) molecules. The large subunit (LSU) contains the ribosomal catalytic site termed the peptidyl transferase center (PTC), which catalyzes the formation of peptide bonds, thereby polymerizing the amino acids delivered by tRNAs into a polypeptide chain. The nascent polypeptides leave the ribosome through a tunnel in the LSU and interact with protein factors that function in enzymatic processing, targeting, and the membrane insertion of nascent chains at the exit of the ribosomal tunnel. The polypeptide is Large ribosomal subunit protein uL30B (rpl702) (Schizosaccharomyces pombe (strain 972 / ATCC 24843) (Fission yeast)).